A 360-amino-acid chain; its full sequence is SPRY domain-containing SOCS box protein 3 (360 aa).

Residues 20 to 55 (RDQDARSPTLPAEEEAWGYDSDGQHSNSDSDTDLLH) are disordered. One can recognise a B30.2/SPRY domain in the interval 85-274 (LHTFHQIKSC…MKVIRSCCCR (190 aa)). Residues 264–315 (SMKVIRSCCCRTSLQYLCCARLRQLLPDSVDSLEVLPLPPGLKQVLGNKLGW) enclose the SOCS box domain. A disordered region spans residues 323–350 (RSNQHKGDTSATTSCGSDSDSSCTPGQD). Residues 331 to 346 (TSATTSCGSDSDSSCT) are compositionally biased toward low complexity.

The protein belongs to the SPSB family. In terms of assembly, substrate-recognition component of the ECS(SPSB3) complex, composed of spsb3, cul5, elob, elob and rnf7/rbx2.

It is found in the nucleus. The protein operates within protein modification; protein ubiquitination. Functionally, substrate-recognition component of a cullin-5-RING E3 ubiquitin-protein ligase complex (ECS complex, also named CRL5 complex), which mediates the ubiquitination and subsequent proteasomal degradation of target proteins. In Xenopus tropicalis (Western clawed frog), this protein is SPRY domain-containing SOCS box protein 3 (spsb3).